A 289-amino-acid chain; its full sequence is Serine/threonine-protein phosphatase Pgam5, mitochondrial (289 aa).

Residues 7 to 23 (FACGTGAGLAAYYLQKL) form a helical membrane-spanning segment.

It belongs to the phosphoglycerate mutase family. BPG-dependent PGAM subfamily. In terms of assembly, interacts with Pk92B/ASK1.

Its subcellular location is the mitochondrion outer membrane. The enzyme catalyses O-phospho-L-seryl-[protein] + H2O = L-seryl-[protein] + phosphate. It carries out the reaction O-phospho-L-threonyl-[protein] + H2O = L-threonyl-[protein] + phosphate. Functionally, displays phosphatase activity for serine/threonine residues, and dephosphorylates and activates Pk92B kinase. Has apparently no phosphoglycerate mutase activity. This chain is Serine/threonine-protein phosphatase Pgam5, mitochondrial, found in Drosophila virilis (Fruit fly).